A 561-amino-acid polypeptide reads, in one-letter code: NAD(P)H-quinone oxidoreductase chain 4 2 (561 aa).

14 consecutive transmembrane segments (helical) span residues 6–26 (FPWLTTIVLLPLLAALLIPFI), 36–56 (WYGLGVGAIDFALMCYVFWKY), 87–107 (LSMPLVLLAGLVTTLSIFAAW), 115–135 (LFYFLMLVLYSAQIGVFVAQD), 136–156 (LMLLFIMWELELVPVYLLISI), 169–189 (FLLYTAAASIFILVAALGMAL), 210–230 (AFELLLYLGLLITFGVKLAVF), 244–264 (SAPVSMILAGVLLKMGGYGLI), 275–295 (HVYFAPVLAILGVVNIVYGGL), 312–332 (VAHMGFVLLGIASFTDLGISG), 333–353 (ALLQMISHGLIAAVLFFLAGV), 376–396 (IFALFTISAMASLALPGMSGF), 419–439 (VTVFLAAVGLILTPIYLLSML), and 490–510 (VAIAACFLVLIIGIGLYPKIA).

The protein belongs to the complex I subunit 4 family.

The protein resides in the cellular thylakoid membrane. The enzyme catalyses a plastoquinone + NADH + (n+1) H(+)(in) = a plastoquinol + NAD(+) + n H(+)(out). It catalyses the reaction a plastoquinone + NADPH + (n+1) H(+)(in) = a plastoquinol + NADP(+) + n H(+)(out). Functionally, NDH-1 shuttles electrons from NAD(P)H, via FMN and iron-sulfur (Fe-S) centers, to quinones in the respiratory chain. The immediate electron acceptor for the enzyme in this species is believed to be plastoquinone. Couples the redox reaction to proton translocation (for every two electrons transferred, four hydrogen ions are translocated across the cytoplasmic membrane), and thus conserves the redox energy in a proton gradient. The protein is NAD(P)H-quinone oxidoreductase chain 4 2 of Trichodesmium erythraeum (strain IMS101).